The following is a 617-amino-acid chain: Hemagglutinin glycoprotein (617 aa).

Topologically, residues 1 to 37 (MSPQRDRINAFYKDNPHPKGSRIVINREHLMIDRPYV) are intravirion. Residues 1–154 (MSPQRDRINA…RIKLDYDQYC (154 aa)) are stalk. The chain crosses the membrane as a helical; Signal-anchor for type II membrane protein span at residues 38–58 (LLAVLFVMFLSLIGLLAIAGI). The Virion surface segment spans residues 59 to 617 (RLHRAAIYTA…VTREDGTNRR (559 aa)). N-linked (GlcNAc...) asparagine; by host glycans are attached at residues asparagine 168, asparagine 187, asparagine 200, asparagine 215, and asparagine 238. Cystine bridges form between cysteine 188–cysteine 606, cysteine 287–cysteine 300, cysteine 381–cysteine 494, cysteine 386–cysteine 394, and cysteine 570–cysteine 579. Residues 458–543 (PMKNLALGVI…VEHAVVYYVY (86 aa)) form an interaction with host NECTIN4 receptor region.

It belongs to the paramyxoviruses hemagglutinin-neuraminidase family. Non-sialidase subfamily. In terms of assembly, homodimer; disulfide-linked. Further forms homotetramer (dimer of dimers). Interacts (via C-terminus) with human NECTIN4 (via N-terminus); this interaction allows attachment to the respiratory epithelium and viral entry. Interacts (via C-terminus) with human SLAMF1/CD150 (via N-terminus); this interaction allows attachment and viral entry into the CD150-expressing immune cells. Interacts with human CD46 antigen (via N-terminus); this interaction allows attachment and viral entry of vaccine and laboratory-adapted strains.

It is found in the virion membrane. The protein resides in the host cell membrane. Its function is as follows. Attaches the virus to the human SLAMF1/CD150 receptor for entry into host dendritic cells, macrophages, activated memory T cells and naive or memory B cells, thereby explaining the long immunosuppression that follows infection. In the respiratory airways, binds to the NECTIN4 receptor for entry into the host cell. Binding of H protein to the receptor induces a conformational change that allows the F protein to trigger virion/cell membranes fusion. The vaccine and laboratory-adapted strains use host CD46 as an alternate receptor. The high degree of interaction between H and CD46 results in down-regulation of the latter from the surface of infected cells, rendering them more sensitive to c3b-mediated complement lysis. This chain is Hemagglutinin glycoprotein (H), found in Measles virus (strain Edmonston) (MeV).